A 763-amino-acid polypeptide reads, in one-letter code: Thyrotropin receptor (763 aa).

An N-terminal signal peptide occupies residues 1 to 21; sequence MRPTPLLRLALFLVLPSSLGG. Residues 22-412 are Extracellular-facing; sequence ERCPSPPCEC…EFNPCEDIMG (391 aa). Residues C31 and C41 are joined by a disulfide bond. The stretch at 51-74 is one LRR 1 repeat; sequence PPSTQTLKFIETHLKTIPSRAFSN. N-linked (GlcNAc...) asparagine glycans are attached at residues N77 and N99. LRR repeat units follow at residues 125 to 150, 151 to 174, 176 to 199, 201 to 223, and 225 to 248; these read LPLLKFLGIFNTGLRVFPDLTKIYST, DVFFILEITDNPYMTSIPANAFQG, CNETLTLKLYNNGFTSIQGHAFNG, KLDAVYLNKNKYLTVIGQDAFAG, and YSGPTLLDISYTSVTALPSKGLEH. N-linked (GlcNAc...) asparagine glycans are attached at residues N177 and N198. N302 carries N-linked (GlcNAc...) asparagine glycosylation. The residue at position 384 (Y384) is a Sulfotyrosine. Residues 413-440 form a helical membrane-spanning segment; sequence YKFLRIVVWFVSLLALLGNVFVLVILLT. Residues 441–449 are Cytoplasmic-facing; it reads SHYKLTVPR. The chain crosses the membrane as a helical span at residues 450–472; that stretch reads FLMCNLAFADFCMGLYLLLIASV. Over 473–493 the chain is Extracellular; sequence DLYTQSEYYNHAIDWQTGPGC. A disulfide bridge connects residues C493 and C568. A helical transmembrane segment spans residues 494-516; sequence NTAGFFTVFASELSVYTLTVITL. Topologically, residues 517–536 are cytoplasmic; that stretch reads ERWHAITFAMRLDRKIRLWH. The helical transmembrane segment at 537-559 threads the bilayer; the sequence is AYVIMLGGWVCCFLLALLPLVGI. Residues 560-579 lie on the Extracellular side of the membrane; the sequence is SSYAKVSICLPMDTETPLAL. Residues 580–601 traverse the membrane as a helical segment; the sequence is AYIILVLLLNIIAFIIVCACYV. Topologically, residues 602–624 are cytoplasmic; sequence KIYITVRNPHYNPGDKDTRIAKR. Residues 625-648 traverse the membrane as a helical segment; sequence MAVLIFTDFMCMAPISFYALSALM. At 649–659 the chain is on the extracellular side; sequence NKPLITVTNSK. Residues 660–681 traverse the membrane as a helical segment; the sequence is ILLVLFYPLNSCANPFLYAIFT. Over 682–763 the chain is Cytoplasmic; the sequence is KAFQRDVFML…TSKEYKRTVL (82 aa). A disordered region spans residues 742–763; it reads ENSHLTPKQQDQTSKEYKRTVL. Polar residues predominate over residues 744–753; it reads SHLTPKQQDQ. Positions 754 to 763 are enriched in basic and acidic residues; the sequence is TSKEYKRTVL. Positions 761-763 match the PDZ-binding motif; the sequence is TVL.

The protein belongs to the G-protein coupled receptor 1 family. FSH/LSH/TSH subfamily. In terms of assembly, interacts with heterodimer GPHA2:GPHB5; this interaction stimulates cAMP production. Interacts (via the PDZ-binding motif) with SCRIB; regulates TSHR trafficking and function. Post-translationally, glycosylated. In terms of processing, sulfated. Sulfation on Tyr-384 plays a role in thyrotropin receptor binding and activation.

Its subcellular location is the cell membrane. The protein resides in the basolateral cell membrane. Functionally, receptor for the thyroid-stimulating hormone (TSH) or thyrotropin. Also acts as a receptor for the heterodimeric glycoprotein hormone (GPHA2:GPHB5) or thyrostimulin. The activity of this receptor is mediated by G proteins which activate adenylate cyclase. Plays a central role in controlling thyroid cell metabolism. The sequence is that of Thyrotropin receptor (TSHR) from Bos taurus (Bovine).